A 96-amino-acid chain; its full sequence is Large ribosomal subunit protein uL23 (96 aa).

It belongs to the universal ribosomal protein uL23 family. Part of the 50S ribosomal subunit. Contacts protein L29, and trigger factor when it is bound to the ribosome.

Its function is as follows. One of the early assembly proteins it binds 23S rRNA. One of the proteins that surrounds the polypeptide exit tunnel on the outside of the ribosome. Forms the main docking site for trigger factor binding to the ribosome. The protein is Large ribosomal subunit protein uL23 of Vesicomyosocius okutanii subsp. Calyptogena okutanii (strain HA).